The primary structure comprises 125 residues: Large ribosomal subunit protein eL22 (125 aa).

It belongs to the eukaryotic ribosomal protein eL22 family. As to quaternary structure, component of the large ribosomal subunit.

The protein resides in the cytoplasm. Component of the large ribosomal subunit. The ribosome is a large ribonucleoprotein complex responsible for the synthesis of proteins in the cell. This Gadus morhua (Atlantic cod) protein is Large ribosomal subunit protein eL22 (rpl22).